Reading from the N-terminus, the 75-residue chain is Putative primary metabolism protein HVA1 (75 aa).

A compositionally biased stretch (polar residues) spans 1–13 (MSVQDKQGQNINV). Disordered regions lie at residues 1 to 24 (MSVQDKQGQNINVGDTVYTPYRGG) and 40 to 75 (AAEKGVKNPPKVLFTDQNNKDVAHNPGTLTDLDKQK).

May play a role in primary metabolism. This chain is Putative primary metabolism protein HVA1, found in Cryptococcus neoformans var. grubii serotype A (strain H99 / ATCC 208821 / CBS 10515 / FGSC 9487) (Filobasidiella neoformans var. grubii).